Here is a 386-residue protein sequence, read N- to C-terminus: HORMA domain-containing protein 1 (386 aa).

In terms of domain architecture, HORMA spans 24 to 224 (TQSLILVKRL…TPFHVLKVKV (201 aa)). Disordered regions lie at residues 237-274 (SIFK…KRDD) and 289-386 (EDGN…TPLN). The span at 289-313 (EDGNLQSDDSQNSALADSQEKTSQA) shows a compositional bias: polar residues. Residues 329–343 (QKPDLELKNQKESAR) are compositionally biased toward basic and acidic residues.

The protein resides in the nucleus. Its subcellular location is the chromosome. Its function is as follows. Plays a key role in meiotic progression by ensuring that sufficient numbers of processed DNA double-strand breaks (DSBs) are available for successful homology search, promoting synaptonemal-complex formation independently and playing key role in the male mid-pachytene checkpoint and the female meiotic prophase checkpoint. In Xenopus laevis (African clawed frog), this protein is HORMA domain-containing protein 1 (hormad1).